We begin with the raw amino-acid sequence, 602 residues long: Leucine-rich repeat-containing protein 40 (602 aa).

The interval Met-1–Asp-22 is disordered. Ser-71 is modified (phosphoserine). 20 LRR repeats span residues Asp-83–Leu-104, Ala-106–Leu-127, Asn-129–Leu-150, Asn-152–Phe-173, Asn-175–Leu-196, Ser-198–Met-219, Arg-221–Met-242, Ser-244–Ser-265, Leu-266–Lys-286, Ser-290–Leu-311, Ser-313–His-335, Leu-336–Lys-356, Thr-400–Ala-421, Ile-426–Leu-447, Met-450–Gln-472, Lys-473–Leu-494, Arg-496–Ile-517, Thr-519–Met-540, Asn-543–Cys-564, and Asn-566–Met-586.

The sequence is that of Leucine-rich repeat-containing protein 40 (LRRC40) from Pongo abelii (Sumatran orangutan).